Reading from the N-terminus, the 136-residue chain is Large ribosomal subunit protein uL16c (136 aa).

The disordered stretch occupies residues 1–20 (MLSPKRTRFRKQHRGRMKGK).

This sequence belongs to the universal ribosomal protein uL16 family. Part of the 50S ribosomal subunit.

Its subcellular location is the plastid. It is found in the chloroplast. This chain is Large ribosomal subunit protein uL16c, found in Lolium perenne (Perennial ryegrass).